A 44-amino-acid polypeptide reads, in one-letter code: MKRTFQPKNLIRKRRHGFRSRMATRAGRKILNRRRSLGCNKLCA.

The protein belongs to the bacterial ribosomal protein bL34 family.

The polypeptide is Large ribosomal subunit protein bL34 (Wolbachia pipientis wMel).